A 70-amino-acid chain; its full sequence is ATP synthase subunit c (70 aa).

2 helical membrane passes run 3–23 (ALAA…IGIA) and 44–64 (LFLI…VIAF).

This sequence belongs to the ATPase C chain family. In terms of assembly, F-type ATPases have 2 components, F(1) - the catalytic core - and F(0) - the membrane proton channel. F(1) has five subunits: alpha(3), beta(3), gamma(1), delta(1), epsilon(1). F(0) has three main subunits: a(1), b(2) and c(10-14). The alpha and beta chains form an alternating ring which encloses part of the gamma chain. F(1) is attached to F(0) by a central stalk formed by the gamma and epsilon chains, while a peripheral stalk is formed by the delta and b chains.

The protein resides in the cell membrane. Its function is as follows. F(1)F(0) ATP synthase produces ATP from ADP in the presence of a proton or sodium gradient. F-type ATPases consist of two structural domains, F(1) containing the extramembraneous catalytic core and F(0) containing the membrane proton channel, linked together by a central stalk and a peripheral stalk. During catalysis, ATP synthesis in the catalytic domain of F(1) is coupled via a rotary mechanism of the central stalk subunits to proton translocation. In terms of biological role, key component of the F(0) channel; it plays a direct role in translocation across the membrane. A homomeric c-ring of between 10-14 subunits forms the central stalk rotor element with the F(1) delta and epsilon subunits. In Caldicellulosiruptor bescii (strain ATCC BAA-1888 / DSM 6725 / KCTC 15123 / Z-1320) (Anaerocellum thermophilum), this protein is ATP synthase subunit c.